A 385-amino-acid polypeptide reads, in one-letter code: Leucine aminopeptidase 1 (385 aa).

The first 20 residues, 1-20 (MKFPSLLSLGVAASTTIVAA), serve as a signal peptide directing secretion. The propeptide occupies 21-87 (VPDQKPIGDI…FPKTFAQTTV (67 aa)). N-linked (GlcNAc...) asparagine glycosylation occurs at Asn-177. Zn(2+) contacts are provided by His-185, Asp-204, Glu-243, and Asp-270. A disulfide bond links Cys-319 and Cys-323. His-352 is a Zn(2+) binding site.

Belongs to the peptidase M28 family. M28E subfamily. As to quaternary structure, monomer. Zn(2+) serves as cofactor.

It is found in the secreted. Its function is as follows. Extracellular aminopeptidase that allows assimilation of proteinaceous substrates. This Ajellomyces capsulatus (strain G186AR / H82 / ATCC MYA-2454 / RMSCC 2432) (Darling's disease fungus) protein is Leucine aminopeptidase 1 (LAP1).